The primary structure comprises 207 residues: Neuroendocrine protein 7B2 (207 aa).

The signal sequence occupies residues 1–22; it reads MVSTMLSGLVLWLTFGWTPALA. A disulfide bond links C116 and C125. Phosphoserine occurs at positions 136 and 200. The interval 168–207 is disordered; the sequence is KGGQRRKRRSVNPYLQGQRLDNVVAKKSVPHFSDEDKDPE.

This sequence belongs to the 7B2 family. Interacts with PCSK2/PC2 early in the secretory pathway. Dissociation occurs at later stages. In terms of processing, proteolytically cleaved in the Golgi by a furin-like convertase to generate bioactive peptides. Sulfated on tyrosine residues.

The protein localises to the secreted. Its function is as follows. Acts as a molecular chaperone for PCSK2/PC2, preventing its premature activation in the regulated secretory pathway. Binds to inactive PCSK2 in the endoplasmic reticulum and facilitates its transport from there to later compartments of the secretory pathway where it is proteolytically matured and activated. Also required for cleavage of PCSK2 but does not appear to be involved in its folding. Plays a role in regulating pituitary hormone secretion. The C-terminal peptide inhibits PCSK2 in vitro. The protein is Neuroendocrine protein 7B2 (SCG5) of Sus scrofa (Pig).